We begin with the raw amino-acid sequence, 85 residues long: Large ribosomal subunit protein bL27 (85 aa).

The tract at residues 1-20 (MAHKKAGGSSRNGRDSEAKR) is disordered.

This sequence belongs to the bacterial ribosomal protein bL27 family.

In Aeromonas salmonicida (strain A449), this protein is Large ribosomal subunit protein bL27.